The following is a 105-amino-acid chain: Large ribosomal subunit protein uL24 (105 aa).

It belongs to the universal ribosomal protein uL24 family. In terms of assembly, part of the 50S ribosomal subunit.

One of two assembly initiator proteins, it binds directly to the 5'-end of the 23S rRNA, where it nucleates assembly of the 50S subunit. In terms of biological role, one of the proteins that surrounds the polypeptide exit tunnel on the outside of the subunit. The chain is Large ribosomal subunit protein uL24 from Thermotoga maritima (strain ATCC 43589 / DSM 3109 / JCM 10099 / NBRC 100826 / MSB8).